The chain runs to 66 residues: Large ribosomal subunit protein bL33 (66 aa).

The protein belongs to the bacterial ribosomal protein bL33 family.

The sequence is that of Large ribosomal subunit protein bL33 from Synechococcus sp. (strain CC9311).